A 401-amino-acid chain; its full sequence is Acetate kinase (401 aa).

Asn-9 serves as a coordination point for Mg(2+). Lys-16 lines the ATP pocket. Arg-88 contacts substrate. The active-site Proton donor/acceptor is Asp-147. ATP is bound by residues 207–211 (HLGNG), 282–284 (DCR), and 333–337 (GIGEN). Residue Glu-388 coordinates Mg(2+).

The protein belongs to the acetokinase family. In terms of assembly, homodimer. Requires Mg(2+) as cofactor. Mn(2+) serves as cofactor.

It is found in the cytoplasm. The enzyme catalyses acetate + ATP = acetyl phosphate + ADP. The protein operates within metabolic intermediate biosynthesis; acetyl-CoA biosynthesis; acetyl-CoA from acetate: step 1/2. In terms of biological role, catalyzes the formation of acetyl phosphate from acetate and ATP. Can also catalyze the reverse reaction. This Haemophilus influenzae (strain PittGG) protein is Acetate kinase.